Reading from the N-terminus, the 617-residue chain is MSYRGRGGGYNNNRGQFSSGPHQHQQNVDSFVAANQYPIEIMGWNGASSGECINFISRKCKVIVSNYSVDSNSGVLKGYVKNESQANTLLNWSGVKFAGQSLRFSKGVSNISNQMGGGASTGSQSTIETISQFLKARYQPEIKMLNLSNVKQDPTLTAQGFFGSLSVSSKFFPALMKVASDLKLDVDSIDLSNNELQDLQTLTSMAQTFPKLQNLSLQNNNFTKIKVFETWRHKLNFLRELILFNNPIVQTNDPAEIQTIKLELMKSFPRLVVLSGEILRNEQVLIANLSFPFESPETMFFQDEDSRNLATNFIANYLKLWDANRSELMILYQNESQFSMQVDSSHPHLIESGNSGYSGSTDFGYYLNNSRNLTRVSSIKARMAKLSIGQEQIYKSFQQLPKTRHDIIATPELFSMEVYKFPTLNGIMITLHGSFDEVAQPEVDGSASSAPSGPRGGSRYHSGPKHKRIPLSKKSFDRTFVVIPGPNGSMIVASDTLLIRPYTSDFPWKVQKLPSNPTAATPGVSATSTPSPLPPTTITTPQLAPPGTGPTTADLPADIKARLNQIQQELLVKILLETKLNINYGIMLCEQSNWDYQQASVNFKNSAASLPSDAFVQ.

Residues 1–10 (MSYRGRGGGY) are compositionally biased toward gly residues. Positions 1 to 24 (MSYRGRGGGYNNNRGQFSSGPHQH) are disordered. LRR repeat units lie at residues 185-206 (DVDSIDLSNNELQDLQTLTSMA), 211-232 (KLQNLSLQNNNFTKIKVFETWR), and 237-258 (FLRELILFNNPIVQTNDPAEIQ). The 191-residue stretch at 309-499 (LATNFIANYL…MIVASDTLLI (191 aa)) folds into the NTF2 domain. 2 disordered regions span residues 442–469 (EVDGSASSAPSGPRGGSRYHSGPKHKRI) and 513–554 (LPSN…TTAD). 2 stretches are compositionally biased toward low complexity: residues 445 to 459 (GSASSAPSGPRGGSR) and 526 to 542 (ATSTPSPLPPTTITTPQ). The region spanning 565–617 (QIQQELLVKILLETKLNINYGIMLCEQSNWDYQQASVNFKNSAASLPSDAFVQ) is the TAP-C domain.

The protein belongs to the NXF family. As to quaternary structure, interacts with nucleoporin complex protein MTR2.

The protein localises to the nucleus. The protein resides in the cytoplasm. Functionally, involved in the export of mRNA from the nucleus to the cytoplasm. The sequence is that of mRNA export factor MEX67 from Candida albicans (strain SC5314 / ATCC MYA-2876) (Yeast).